A 422-amino-acid chain; its full sequence is Histidine--tRNA ligase (422 aa).

This sequence belongs to the class-II aminoacyl-tRNA synthetase family. As to quaternary structure, homodimer.

It localises to the cytoplasm. It catalyses the reaction tRNA(His) + L-histidine + ATP = L-histidyl-tRNA(His) + AMP + diphosphate + H(+). In Vibrio parahaemolyticus serotype O3:K6 (strain RIMD 2210633), this protein is Histidine--tRNA ligase.